Consider the following 87-residue polypeptide: Small ribosomal subunit protein bS20 (87 aa).

The disordered stretch occupies residues 1–22 (MANSAQARKRARQAVKQRAHNA). A compositionally biased stretch (basic residues) spans 7 to 19 (ARKRARQAVKQRA).

This sequence belongs to the bacterial ribosomal protein bS20 family.

Functionally, binds directly to 16S ribosomal RNA. This chain is Small ribosomal subunit protein bS20, found in Methylobacillus flagellatus (strain ATCC 51484 / DSM 6875 / VKM B-1610 / KT).